Reading from the N-terminus, the 208-residue chain is Uracil phosphoribosyltransferase (208 aa).

Residues R78, R103, and 130–138 (DPMLATGGS) contribute to the 5-phospho-alpha-D-ribose 1-diphosphate site. Uracil-binding positions include I193 and 198–200 (GDA). Position 199 (D199) interacts with 5-phospho-alpha-D-ribose 1-diphosphate.

Belongs to the UPRTase family. Mg(2+) is required as a cofactor.

The enzyme catalyses UMP + diphosphate = 5-phospho-alpha-D-ribose 1-diphosphate + uracil. Its pathway is pyrimidine metabolism; UMP biosynthesis via salvage pathway; UMP from uracil: step 1/1. With respect to regulation, allosterically activated by GTP. Its function is as follows. Catalyzes the conversion of uracil and 5-phospho-alpha-D-ribose 1-diphosphate (PRPP) to UMP and diphosphate. This is Uracil phosphoribosyltransferase from Shewanella baltica (strain OS223).